Here is a 70-residue protein sequence, read N- to C-terminus: Large ribosomal subunit protein bL31 (70 aa).

Zn(2+) is bound by residues Cys16, Cys18, Cys37, and Cys40.

Belongs to the bacterial ribosomal protein bL31 family. Type A subfamily. Part of the 50S ribosomal subunit. It depends on Zn(2+) as a cofactor.

In terms of biological role, binds the 23S rRNA. This is Large ribosomal subunit protein bL31 from Proteus mirabilis (strain HI4320).